The following is a 44-amino-acid chain: Photosystem I reaction center subunit IX (44 aa).

A helical transmembrane segment spans residues 7–27 (YLSVAPVLSTLWFGALAGLLI).

Belongs to the PsaJ family.

It localises to the plastid. The protein localises to the chloroplast thylakoid membrane. In terms of biological role, may help in the organization of the PsaE and PsaF subunits. The chain is Photosystem I reaction center subunit IX from Solanum bulbocastanum (Wild potato).